Here is a 63-residue protein sequence, read N- to C-terminus: Prokaryotic ubiquitin-like protein Pup (63 aa).

The segment at 1 to 28 is disordered; that stretch reads MSDRQTQIPAGGGREDDHDDQVQSAGQV. The tract at residues 19 to 57 is ARC ATPase binding; it reads DDQVQSAGQVQVNTEGVDDLLDEIDGLLENNAEEFVRSY. An Isoglutamyl lysine isopeptide (Glu-Lys) (interchain with K-? in acceptor proteins) cross-link involves residue Glu63.

The protein belongs to the prokaryotic ubiquitin-like protein family. In terms of assembly, strongly interacts with the proteasome-associated ATPase ARC through a hydrophobic interface; the interacting region of Pup lies in its C-terminal half. There is one Pup binding site per ARC hexamer ring.

It functions in the pathway protein degradation; proteasomal Pup-dependent pathway. Functionally, protein modifier that is covalently attached to lysine residues of substrate proteins, thereby targeting them for proteasomal degradation. The tagging system is termed pupylation. The protein is Prokaryotic ubiquitin-like protein Pup of Corynebacterium efficiens (strain DSM 44549 / YS-314 / AJ 12310 / JCM 11189 / NBRC 100395).